We begin with the raw amino-acid sequence, 117 residues long: Large ribosomal subunit protein uL18 (117 aa).

Belongs to the universal ribosomal protein uL18 family. As to quaternary structure, part of the 50S ribosomal subunit; part of the 5S rRNA/L5/L18/L25 subcomplex. Contacts the 5S and 23S rRNAs.

Its function is as follows. This is one of the proteins that bind and probably mediate the attachment of the 5S RNA into the large ribosomal subunit, where it forms part of the central protuberance. In Pseudoalteromonas atlantica (strain T6c / ATCC BAA-1087), this protein is Large ribosomal subunit protein uL18.